A 129-amino-acid polypeptide reads, in one-letter code: Large ribosomal subunit protein bL12 (129 aa).

It belongs to the bacterial ribosomal protein bL12 family. Homodimer. Part of the ribosomal stalk of the 50S ribosomal subunit. Forms a multimeric L10(L12)X complex, where L10 forms an elongated spine to which 2 to 4 L12 dimers bind in a sequential fashion. Binds GTP-bound translation factors.

Its function is as follows. Forms part of the ribosomal stalk which helps the ribosome interact with GTP-bound translation factors. Is thus essential for accurate translation. The polypeptide is Large ribosomal subunit protein bL12 (Micrococcus luteus (strain ATCC 4698 / DSM 20030 / JCM 1464 / CCM 169 / CCUG 5858 / IAM 1056 / NBRC 3333 / NCIMB 9278 / NCTC 2665 / VKM Ac-2230) (Micrococcus lysodeikticus)).